The following is a 108-amino-acid chain: UPF0145 protein SYNPCC7002_A1337 (108 aa).

Belongs to the UPF0145 family.

This chain is UPF0145 protein SYNPCC7002_A1337, found in Picosynechococcus sp. (strain ATCC 27264 / PCC 7002 / PR-6) (Agmenellum quadruplicatum).